A 137-amino-acid polypeptide reads, in one-letter code: uncharacterized protein (137 aa).

This sequence belongs to the DCC thiol-disulfide oxidoreductase family.

This is an uncharacterized protein from Bacillus subtilis (strain 168).